The chain runs to 134 residues: Outer membrane lipoprotein RcsF (134 aa).

Residues 1–15 form the signal peptide; that stretch reads MRALPICLVALMLSG. Residue cysteine 16 is the site of N-palmitoyl cysteine attachment. Cysteine 16 carries the S-diacylglycerol cysteine lipid modification. Disordered regions lie at residues 22-48 and 67-88; these read SPVE…RATP and GEVS…IPTA. Polar residues predominate over residues 72–82; that stretch reads DSCQASNQDSP. Intrachain disulfides connect cysteine 74-cysteine 118 and cysteine 109-cysteine 124.

The protein belongs to the RcsF family.

Its subcellular location is the cell outer membrane. Functionally, essential component of the Rcs signaling system, which controls transcription of numerous genes. Plays a role in signal transduction from the cell surface to the histidine kinase RcsC. May detect outer membrane defects. The sequence is that of Outer membrane lipoprotein RcsF from Escherichia coli O6:H1 (strain CFT073 / ATCC 700928 / UPEC).